The chain runs to 393 residues: S-adenosylmethionine sensor upstream of mTORC1 (393 aa).

The segment at 1–35 (MDLRSSAETDPDLSENHPGSVPAELQSRKQEQEKL) is disordered. Arginine 94 contributes to the S-adenosyl-L-methionine binding site. A disordered region spans residues 118–141 (DEKSARHATAGNANTDTNAPPQLS). The segment covering 125 to 136 (ATAGNANTDTNA) has biased composition (low complexity). S-adenosyl-L-methionine is bound by residues glycine 160, aspartate 178, aspartate 190, phenylalanine 191, and serine 232. The disordered stretch occupies residues 362-393 (ELPETPYDSDSGESQSSSAPFYELEDPILLQS).

This sequence belongs to the BMT2/SAMTOR family. Interacts with the GATOR1 complex; interaction is disrupted when samtor binds S-adenosyl-L-methionine. Interacts with the KICSTOR complex; interaction is disrupted when bmt2/samtor binds S-adenosyl-L-methionine.

S-adenosyl-L-methionine-binding protein that acts as an inhibitor of mTORC1 signaling via interaction with the GATOR1 and KICSTOR complexes. Acts as a sensor of S-adenosyl-L-methionine to signal methionine sufficiency to mTORC1: in presence of methionine, binds S-adenosyl-L-methionine, leading to disrupt interaction with the GATOR1 and KICSTOR complexes and promote mTORC1 signaling. Upon methionine starvation, S-adenosyl-L-methionine levels are reduced, thereby promoting the association with GATOR1 and KICSTOR, leading to inhibit mTORC1 signaling. Probably also acts as a S-adenosyl-L-methionine-dependent methyltransferase. The chain is S-adenosylmethionine sensor upstream of mTORC1 from Danio rerio (Zebrafish).